The chain runs to 255 residues: Large ribosomal subunit protein uL4 (255 aa).

Belongs to the universal ribosomal protein uL4 family. In terms of assembly, part of the 50S ribosomal subunit.

Its function is as follows. One of the primary rRNA binding proteins, this protein initially binds near the 5'-end of the 23S rRNA. It is important during the early stages of 50S assembly. It makes multiple contacts with different domains of the 23S rRNA in the assembled 50S subunit and ribosome. Forms part of the polypeptide exit tunnel. This Thermococcus gammatolerans (strain DSM 15229 / JCM 11827 / EJ3) protein is Large ribosomal subunit protein uL4.